Here is a 797-residue protein sequence, read N- to C-terminus: Adhesion G-protein coupled receptor G7 (797 aa).

The first 26 residues, 1-26, serve as a signal peptide directing secretion; the sequence is MASCRAWNLRVLVAVVCGLLTGIILG. The Extracellular portion of the chain corresponds to 27–438; it reads LGIWRIVIRI…QYPKSLDILS (412 aa). 9 N-linked (GlcNAc...) asparagine glycosylation sites follow: Asn-82, Asn-159, Asn-178, Asn-191, Asn-247, Asn-261, Asn-312, Asn-316, and Asn-387. A GAIN-B domain is found at 275–428; the sequence is FSVQKGASSS…AVLMTFKKDY (154 aa). 2 cysteine pairs are disulfide-bonded: Cys-383/Cys-410 and Cys-398/Cys-412. Residues 383 to 428 are GPS; that stretch reads CVYWNLSAKDWDTYGCQKDKGTDGFLRCRCNHTTNFAVLMTFKKDY. Residue Asn-413 is glycosylated (N-linked (GlcNAc...) asparagine). Residues 439–459 form a helical membrane-spanning segment; that stretch reads NVGCALSVTGLALTVIFQIVT. The Cytoplasmic portion of the chain corresponds to 460–468; it reads RKVRKTSVT. A helical membrane pass occupies residues 469 to 489; the sequence is WVLVNLCISMLIFNLLFVFGI. The Extracellular portion of the chain corresponds to 490–528; it reads ENSNKNLQTSDGDINNIDFDNNDIPRTDTINIPNPMCTA. The helical transmembrane segment at 529–549 threads the bilayer; sequence IAALLHYFLLVTFTWNALSAA. The Cytoplasmic portion of the chain corresponds to 550-565; sequence QLYYLLIRTMKPLPRH. Residues 566–586 traverse the membrane as a helical segment; it reads FILFISLIGWGVPAIVVAITV. Topologically, residues 587–623 are extracellular; the sequence is GVIYSQNGNNPQWELDYRQEKICWLAIPEPNGVIKSP. Residues 624–644 traverse the membrane as a helical segment; sequence LLWSFIVPVTIILISNVVMFI. The Cytoplasmic segment spans residues 645–669; sequence TISIKVLWKNNQNLTSTKKVSSMKK. A helical membrane pass occupies residues 670–690; that stretch reads IVSTLSVAVVFGITWILAYLM. Residues 691–698 lie on the Extracellular side of the membrane; the sequence is LVNDDSIR. The chain crosses the membrane as a helical span at residues 699 to 719; the sequence is IVFSYIFCLFNTTQGLQIFIL. The Cytoplasmic segment spans residues 720-797; sequence YTVRTKVFQS…SESDNAKESI (78 aa).

It belongs to the G-protein coupled receptor 2 family. Adhesion G-protein coupled receptor (ADGR) subfamily.

The protein localises to the membrane. Orphan receptor. This chain is Adhesion G-protein coupled receptor G7 (ADGRG7), found in Homo sapiens (Human).